A 149-amino-acid polypeptide reads, in one-letter code: MNRITNNKTIWVKPKCVEKKWCMIDASDKVLGRVATEAVKILRGKHKPYYTPHQDLGDNVIIINASKIRLTGKKYSQKIYYRHSRYPGGLRSDTFRTLSERKPTAPLEIAIKGMLPKGPLGRELFRNLKVFAGSNHMLNSQNFYKLEAN.

The protein belongs to the universal ribosomal protein uL13 family. In terms of assembly, part of the 50S ribosomal subunit.

Functionally, this protein is one of the early assembly proteins of the 50S ribosomal subunit, although it is not seen to bind rRNA by itself. It is important during the early stages of 50S assembly. The sequence is that of Large ribosomal subunit protein uL13 from Borrelia turicatae (strain 91E135).